The sequence spans 387 residues: Anhydro-N-acetylmuramic acid kinase (387 aa).

17-24 serves as a coordination point for ATP; the sequence is GTSMDGVD.

The protein belongs to the anhydro-N-acetylmuramic acid kinase family.

The enzyme catalyses 1,6-anhydro-N-acetyl-beta-muramate + ATP + H2O = N-acetyl-D-muramate 6-phosphate + ADP + H(+). It participates in amino-sugar metabolism; 1,6-anhydro-N-acetylmuramate degradation. It functions in the pathway cell wall biogenesis; peptidoglycan recycling. In terms of biological role, catalyzes the specific phosphorylation of 1,6-anhydro-N-acetylmuramic acid (anhMurNAc) with the simultaneous cleavage of the 1,6-anhydro ring, generating MurNAc-6-P. Is required for the utilization of anhMurNAc either imported from the medium or derived from its own cell wall murein, and thus plays a role in cell wall recycling. This Burkholderia mallei (strain ATCC 23344) protein is Anhydro-N-acetylmuramic acid kinase.